Consider the following 559-residue polypeptide: 5'-AMP-activated protein kinase catalytic subunit alpha-1 (559 aa).

The Protein kinase domain maps to 27–279 (YILGDTLGVG…IKDIREHEWF (253 aa)). Thr-32 carries the phosphothreonine modification. ATP contacts are provided by residues 33–41 (LGVGTFGKV) and Lys-56. Asp-150 acts as the Proton acceptor in catalysis. Thr-183 is subject to Phosphothreonine; by LKB1 and CaMKK2. Residues Thr-269 and Thr-355 each carry the phosphothreonine modification. Residues 302-381 (EALKEVCEKF…PERVPFLVAE (80 aa)) form an AIS region. Ser-356 is modified (phosphoserine). The residue at position 360 (Ser-360) is a Phosphoserine; by ULK1. Thr-368 carries the post-translational modification Phosphothreonine; by ULK1. Phosphothreonine is present on Thr-382. At Ser-397 the chain carries Phosphoserine; by ULK1. A phosphoserine mark is found at Ser-467 and Ser-486. A disordered region spans residues 484-536 (AKSGTATPQRSGSISNYRSCQRSDSDAEAQGKPSEVSLTSSVTSLDSSPVDVA). A compositionally biased stretch (polar residues) spans 485 to 505 (KSGTATPQRSGSISNYRSCQR). Ser-486 is modified (phosphoserine; by ULK1). A Phosphothreonine; by ULK1 modification is found at Thr-488. Residue Thr-490 is modified to Phosphothreonine. 4 positions are modified to phosphoserine: Ser-496, Ser-508, Ser-524, and Ser-527. The span at 516-535 (PSEVSLTSSVTSLDSSPVDV) shows a compositional bias: low complexity.

It belongs to the protein kinase superfamily. CAMK Ser/Thr protein kinase family. SNF1 subfamily. AMPK is a heterotrimer of an alpha catalytic subunit (PRKAA1 or PRKAA2), a beta (PRKAB1 or PRKAB2) and a gamma non-catalytic subunits (PRKAG1, PRKAG2 or PRKAG3). Interacts with FNIP1 and FNIP2. Mg(2+) serves as cofactor. Post-translationally, ubiquitinated. In terms of processing, phosphorylated at Thr-183 by STK11/LKB1 in complex with STE20-related adapter-alpha (STRADA) pseudo kinase and CAB39. Also phosphorylated at Thr-183 by CAMKK2; triggered by a rise in intracellular calcium ions, without detectable changes in the AMP/ATP ratio. CAMKK1 can also phosphorylate Thr-183, but at a much lower level. Dephosphorylated by protein phosphatase 2A and 2C (PP2A and PP2C). Phosphorylated by ULK1 and ULK2; leading to negatively regulate AMPK activity and suggesting the existence of a regulatory feedback loop between ULK1, ULK2 and AMPK. There is some ambiguity for some phosphosites: Ser-360/Thr-368 and Ser-486/Thr-488. Dephosphorylated by PPM1A and PPM1B. Glycosylated; O-GlcNAcylated by OGT, promoting the AMP-activated protein kinase (AMPK) activity. In terms of tissue distribution, low expression in kidney, liver, lung, heart and brain.

The protein resides in the cytoplasm. The protein localises to the nucleus. It catalyses the reaction L-seryl-[protein] + ATP = O-phospho-L-seryl-[protein] + ADP + H(+). The catalysed reaction is L-threonyl-[protein] + ATP = O-phospho-L-threonyl-[protein] + ADP + H(+). It carries out the reaction L-seryl-[acetyl-CoA carboxylase] + ATP = O-phospho-L-seryl-[acetyl-CoA carboxylase] + ADP + H(+). The enzyme catalyses L-seryl-[3-hydroxy-3-methylglutaryl-coenzyme A reductase] + ATP = O-phospho-L-seryl-[3-hydroxy-3-methylglutaryl-coenzyme A reductase] + ADP + H(+). It catalyses the reaction L-seryl-[tau protein] + ATP = O-phospho-L-seryl-[tau protein] + ADP + H(+). The catalysed reaction is L-threonyl-[tau protein] + ATP = O-phospho-L-threonyl-[tau protein] + ADP + H(+). Its activity is regulated as follows. Activated by phosphorylation on Thr-183. Binding of AMP to non-catalytic gamma subunit (PRKAG1, PRKAG2 or PRKAG3) results in allosteric activation, inducing phosphorylation on Thr-183. AMP-binding to gamma subunit also sustains activity by preventing dephosphorylation of Thr-183. ADP also stimulates Thr-183 phosphorylation, without stimulating already phosphorylated AMPK. ATP promotes dephosphorylation of Thr-183, rendering the enzyme inactive. Under physiological conditions AMPK mainly exists in its inactive form in complex with ATP, which is much more abundant than AMP. Selectively inhibited by compound C (6-[4-(2-Piperidin-1-yl-ethoxy)-phenyl)]-3-pyridin-4-yl-pyyrazolo[1,5-a] pyrimidine. Activated by resveratrol, a natural polyphenol present in red wine, and S17834, a synthetic polyphenol. In terms of biological role, catalytic subunit of AMP-activated protein kinase (AMPK), an energy sensor protein kinase that plays a key role in regulating cellular energy metabolism. In response to reduction of intracellular ATP levels, AMPK activates energy-producing pathways and inhibits energy-consuming processes: inhibits protein, carbohydrate and lipid biosynthesis, as well as cell growth and proliferation. AMPK acts via direct phosphorylation of metabolic enzymes, and by longer-term effects via phosphorylation of transcription regulators. Regulates lipid synthesis by phosphorylating and inactivating lipid metabolic enzymes such as ACACA, ACACB, GYS1, HMGCR and LIPE; regulates fatty acid and cholesterol synthesis by phosphorylating acetyl-CoA carboxylase (ACACA and ACACB) and hormone-sensitive lipase (LIPE) enzymes, respectively. Promotes lipolysis of lipid droplets by mediating phosphorylation of isoform 1 of CHKA (CHKalpha2). Regulates insulin-signaling and glycolysis by phosphorylating IRS1, PFKFB2 and PFKFB3. AMPK stimulates glucose uptake in muscle by increasing the translocation of the glucose transporter SLC2A4/GLUT4 to the plasma membrane, possibly by mediating phosphorylation of TBC1D4/AS160. Regulates transcription and chromatin structure by phosphorylating transcription regulators involved in energy metabolism such as CRTC2/TORC2, FOXO3, histone H2B, HDAC5, MEF2C, MLXIPL/ChREBP, EP300, HNF4A, p53/TP53, SREBF1, SREBF2 and PPARGC1A. Acts as a key regulator of glucose homeostasis in liver by phosphorylating CRTC2/TORC2, leading to CRTC2/TORC2 sequestration in the cytoplasm. In response to stress, phosphorylates 'Ser-36' of histone H2B (H2BS36ph), leading to promote transcription. Acts as a key regulator of cell growth and proliferation by phosphorylating FNIP1, TSC2, RPTOR, WDR24 and ATG1/ULK1: in response to nutrient limitation, negatively regulates the mTORC1 complex by phosphorylating RPTOR component of the mTORC1 complex and by phosphorylating and activating TSC2. Also phosphorylates and inhibits GATOR2 subunit WDR24 in response to nutrient limitation, leading to suppress glucose-mediated mTORC1 activation. In response to energetic stress, phosphorylates FNIP1, inactivating the non-canonical mTORC1 signaling, thereby promoting nuclear translocation of TFEB and TFE3, and inducing transcription of lysosomal or autophagy genes. In response to nutrient limitation, promotes autophagy by phosphorylating and activating ATG1/ULK1. In that process, it also activates WDR45/WIPI4. Phosphorylates CASP6, thereby preventing its autoprocessing and subsequent activation. In response to nutrient limitation, phosphorylates transcription factor FOXO3 promoting FOXO3 mitochondrial import. Also acts as a regulator of cellular polarity by remodeling the actin cytoskeleton; probably by indirectly activating myosin. AMPK also acts as a regulator of circadian rhythm by mediating phosphorylation of CRY1, leading to destabilize it. May regulate the Wnt signaling pathway by phosphorylating CTNNB1, leading to stabilize it. Also has tau-protein kinase activity: in response to amyloid beta A4 protein (APP) exposure, activated by CAMKK2, leading to phosphorylation of MAPT/TAU; however the relevance of such data remains unclear in vivo. Also phosphorylates CFTR, EEF2K, KLC1, NOS3 and SLC12A1. Regulates hepatic lipogenesis. Activated via SIRT3, represses sterol regulatory element-binding protein (SREBP) transcriptional activities and ATP-consuming lipogenesis to restore cellular energy balance. Upon stress, regulates mitochondrial fragmentation through phosphorylation of MTFR1L. The polypeptide is 5'-AMP-activated protein kinase catalytic subunit alpha-1 (Prkaa1) (Rattus norvegicus (Rat)).